The chain runs to 791 residues: Metabotropic glutamate receptor-like protein D (791 aa).

A signal peptide spans 1–22 (MKINSFLIILILLFISIKNSNG). The Extracellular portion of the chain corresponds to 23–390 (EPEKKFKLIT…TEVYQSRPIQ (368 aa)). Residues Asn-72, Asn-168, Asn-279, Asn-290, Asn-306, and Asn-349 are each glycosylated (N-linked (GlcNAc...) asparagine). Residues 391-411 (IAISSISSFFIVTVLVMMGLV) traverse the membrane as a helical segment. Over 412–424 (VRFRKNPSIRSAS) the chain is Cytoplasmic. Residues 425–445 (PIFLNFILFGALIIYVGIIIW) traverse the membrane as a helical segment. Topologically, residues 446 to 453 (SSSINSAS) are extracellular. A helical transmembrane segment spans residues 454-474 (CNAQFWLVTLGFTTLIGSLVV). The Cytoplasmic segment spans residues 475–495 (KNVRIWLIFDNPELKLVKITN). The chain crosses the membrane as a helical span at residues 496 to 516 (LQLVPWVGVCLVINIILMSIL). At 517–550 (TSVGDLREVNAQGIDSLGKYEFMRICKMNSSGAS) the chain is on the extracellular side. Residue Asn-545 is glycosylated (N-linked (GlcNAc...) asparagine). The helical transmembrane segment at 551–571 (TLYTILAYFAALLLIGVFVSW) threads the bilayer. At 572–585 (KIRIVDILEFNESK) the chain is on the cytoplasmic side. Residues 586-606 (AIANTLYAISFCLFVIVPLMI) form a helical membrane-spanning segment. The Extracellular portion of the chain corresponds to 607–615 (SPQDKQSEK). A helical transmembrane segment spans residues 616-636 (IILCIAGLFIVTAAVLIIFVP). Residues 637–791 (KFYRVYIFGS…KNEENNDGDN (155 aa)) lie on the Cytoplasmic side of the membrane. Disordered stretches follow at residues 664–715 (TARA…SEPN) and 746–791 (IITE…DGDN). Over residues 674–689 (SSGGGAGSGGATGGSG) the composition is skewed to gly residues. Over residues 749–760 (ENGQDSNNNNNN) the composition is skewed to low complexity. Positions 752-781 (QDSNNNNNNEENKDNNIENNKISEEIKENL) form a coiled coil. Basic and acidic residues predominate over residues 761-785 (EENKDNNIENNKISEEIKENLKNEE).

In the N-terminal section; belongs to the BMP lipoprotein family. The protein in the C-terminal section; belongs to the G-protein coupled receptor 3 family. GABA-B receptor subfamily.

It is found in the membrane. The protein is Metabotropic glutamate receptor-like protein D (grlD) of Dictyostelium discoideum (Social amoeba).